Consider the following 162-residue polypeptide: Putative pre-16S rRNA nuclease (162 aa).

Belongs to the YqgF nuclease family.

It localises to the cytoplasm. In terms of biological role, could be a nuclease involved in processing of the 5'-end of pre-16S rRNA. This is Putative pre-16S rRNA nuclease from Brucella abortus (strain S19).